Consider the following 127-residue polypeptide: Small ribosomal subunit protein uS13 (127 aa).

The tract at residues 93–127 (RRSLPVRGQRTHTNARTRKGPRRGTVAGKKKATKT) is disordered.

It belongs to the universal ribosomal protein uS13 family. As to quaternary structure, part of the 30S ribosomal subunit. Forms a loose heterodimer with protein S19. Forms two bridges to the 50S subunit in the 70S ribosome.

Its function is as follows. Located at the top of the head of the 30S subunit, it contacts several helices of the 16S rRNA. In the 70S ribosome it contacts the 23S rRNA (bridge B1a) and protein L5 of the 50S subunit (bridge B1b), connecting the 2 subunits; these bridges are implicated in subunit movement. Contacts the tRNAs in the A and P-sites. This Acidobacterium capsulatum (strain ATCC 51196 / DSM 11244 / BCRC 80197 / JCM 7670 / NBRC 15755 / NCIMB 13165 / 161) protein is Small ribosomal subunit protein uS13.